Here is a 297-residue protein sequence, read N- to C-terminus: MHTPVLLKEMLEILDPQDGKIYVDATFGAGGYTKAILNAANCKVCAIDQDKHTSIFYEELANNFPNRIHFFINKFSQIKQVLLGAQLERVDGVVFDIGVSSMQLDDANRGFSFSKNGPLDMRMSTSNSIDASVFVNTVSEEEIANIIYQYGGEKYSRKIAKAIINFRKKKVIETTGELASIVRSVVSRSKNHDINPATRTFQAIRIWVNKELQELEQGIMCAADLLNPGGKIIVVSFHSLEDRIVKMIFKSLCSDEISLKLNTGFQLINKKIVRPSFEEILNNPRSRSAKLRAILKI.

Residues 30–32 (GGY), Asp48, Phe75, Asp96, and Gln103 contribute to the S-adenosyl-L-methionine site.

The protein belongs to the methyltransferase superfamily. RsmH family.

It localises to the cytoplasm. The catalysed reaction is cytidine(1402) in 16S rRNA + S-adenosyl-L-methionine = N(4)-methylcytidine(1402) in 16S rRNA + S-adenosyl-L-homocysteine + H(+). Functionally, specifically methylates the N4 position of cytidine in position 1402 (C1402) of 16S rRNA. The chain is Ribosomal RNA small subunit methyltransferase H from Ehrlichia canis (strain Jake).